Reading from the N-terminus, the 217-residue chain is ATP-dependent Clp protease proteolytic subunit (217 aa).

Serine 120 serves as the catalytic Nucleophile. Residue histidine 145 is part of the active site.

This sequence belongs to the peptidase S14 family. As to quaternary structure, fourteen ClpP subunits assemble into 2 heptameric rings which stack back to back to give a disk-like structure with a central cavity, resembling the structure of eukaryotic proteasomes.

The protein resides in the cytoplasm. It carries out the reaction Hydrolysis of proteins to small peptides in the presence of ATP and magnesium. alpha-casein is the usual test substrate. In the absence of ATP, only oligopeptides shorter than five residues are hydrolyzed (such as succinyl-Leu-Tyr-|-NHMec, and Leu-Tyr-Leu-|-Tyr-Trp, in which cleavage of the -Tyr-|-Leu- and -Tyr-|-Trp bonds also occurs).. In terms of biological role, cleaves peptides in various proteins in a process that requires ATP hydrolysis. Has a chymotrypsin-like activity. Plays a major role in the degradation of misfolded proteins. This Ralstonia nicotianae (strain ATCC BAA-1114 / GMI1000) (Ralstonia solanacearum) protein is ATP-dependent Clp protease proteolytic subunit.